A 669-amino-acid chain; its full sequence is Glycine--tRNA ligase beta subunit (669 aa).

The protein belongs to the class-II aminoacyl-tRNA synthetase family. Tetramer of two alpha and two beta subunits.

It is found in the cytoplasm. The enzyme catalyses tRNA(Gly) + glycine + ATP = glycyl-tRNA(Gly) + AMP + diphosphate. The protein is Glycine--tRNA ligase beta subunit of Phenylobacterium zucineum (strain HLK1).